The primary structure comprises 54 residues: Large ribosomal subunit protein bL33 (54 aa).

It belongs to the bacterial ribosomal protein bL33 family.

The polypeptide is Large ribosomal subunit protein bL33 (Petrotoga mobilis (strain DSM 10674 / SJ95)).